The chain runs to 156 residues: Putative pre-16S rRNA nuclease (156 aa).

This sequence belongs to the YqgF nuclease family.

The protein localises to the cytoplasm. Its function is as follows. Could be a nuclease involved in processing of the 5'-end of pre-16S rRNA. This is Putative pre-16S rRNA nuclease from Ehrlichia ruminantium (strain Welgevonden).